Consider the following 276-residue polypeptide: Transmembrane protein 81 (276 aa).

An N-terminal signal peptide occupies residues 1–24 (MKTSATSFIPGSLVLAFCLPVVAT). Residues 25 to 225 (SPKTLAIPEK…QHPPWKKKVA (201 aa)) are Extracellular-facing. An N-linked (GlcNAc...) asparagine glycan is attached at N45. The region spanning 83–176 (TNWLCGMLHF…NLRLVKRLYF (94 aa)) is the Ig-like domain. Residues C104 and C160 are joined by a disulfide bond. N211 carries N-linked (GlcNAc...) asparagine glycosylation. The helical transmembrane segment at 226 to 246 (IAVGIGVAGGVTGGVLVSIVL) threads the bilayer. Residues 247 to 276 (CGRLSVIHSSASLETLQALLPKGGMLRKPD) lie on the Cytoplasmic side of the membrane.

In terms of assembly, forms a complex with IZUMO1 and SPACA6 on spermatocyte cell membrane required for fertilization.

The protein resides in the cell membrane. Its function is as follows. Essential fertilization factor required for male fertility. Part of a conserved trimeric sperm complex with the essential fertilization factors IZUMO1 and SPACA6 which bridges sperm and oocyte membranes during fertilization by binding to IZUMO1R/JUNO on the oocyte. This Bos taurus (Bovine) protein is Transmembrane protein 81 (TMEM81).